We begin with the raw amino-acid sequence, 306 residues long: Manganese transport system membrane protein MntB (306 aa).

The Periplasmic portion of the chain corresponds to 1-25 (MNQLVVAFPFWHWLVEPLQYEFLIR). A helical membrane pass occupies residues 26-46 (AIWVSAFVGLVCAVLSCYITL). Residues 47–48 (KG) lie on the Cytoplasmic side of the membrane. The helical transmembrane segment at 49–69 (WSLMGDAISHAVVPGVVLAYA) threads the bilayer. Residues 70–71 (LN) lie on the Periplasmic side of the membrane. Residues 72 to 92 (IPFAIGAFTFGFGATVAIGYV) traverse the membrane as a helical segment. Residues 93–101 (KSKTRLKED) are Cytoplasmic-facing. Residues 102–122 (AVIGIVFTGFFALGLVLVTKI) traverse the membrane as a helical segment. The Periplasmic portion of the chain corresponds to 123–141 (PSNVDLFHILFGNVLGISQ). Residues 142-162 (QDIIQTLIAGSITLIVILLRR) form a helical membrane-spanning segment. At 163–179 (KDLLLFCFDPNHAKAIG) the chain is on the cytoplasmic side. Residues 180-200 (LRTQVMYYTLLSVLALTIVAA) form a helical membrane-spanning segment. At 201–202 (LQ) the chain is on the periplasmic side. A helical transmembrane segment spans residues 203-223 (TAGIILVISMLVTPGSIGYLL). Residues 224 to 228 (SDRFD) are Cytoplasmic-facing. The chain crosses the membrane as a helical span at residues 229–249 (HMLWYSVVSSVLSCVLGTYLS). Residues 250–255 (YHFDVS) are Periplasmic-facing. A helical membrane pass occupies residues 256–276 (TGGMIVVILTTLFVIAMIGAP). Residues 277–306 (KYGILAQEWRKRSGPNPEDDENQTVVVDQV) are Cytoplasmic-facing.

It belongs to the ABC-3 integral membrane protein family.

The protein localises to the cell membrane. Functionally, part of an ATP-driven transport system for manganese. This Synechocystis sp. (strain ATCC 27184 / PCC 6803 / Kazusa) protein is Manganese transport system membrane protein MntB (mntB).